The chain runs to 332 residues: T-cell leukemia homeobox protein 1 (332 aa).

Residues 203–262 constitute a DNA-binding region (homeobox); sequence KKKPRTSFTRLQICELEKRFHRQKYLASAERAALAKALKMTDAQVKTWFQNRRTKWRRQT. Lysine 238 is subject to N6-acetyllysine.

Expressed in various embryonic tissues, including branchial arches, some component of the nervous system and spleen.

The protein resides in the nucleus. Functionally, controls the genesis of the spleen. Binds to the DNA sequence 5'-GGCGGTAAGTGG-3'. The polypeptide is T-cell leukemia homeobox protein 1 (Tlx1) (Mus musculus (Mouse)).